The following is a 474-amino-acid chain: Variant surface glycoprotein MITAT 1.5 (474 aa).

The first 22 residues, 1–22 (MIHSNKVATVVLALISSWPADG), serve as a signal peptide directing secretion. Disulfide bonds link Cys-37/Cys-161 and Cys-144/Cys-214. 2 N-linked (GlcNAc...) asparagine glycosylation sites follow: Asn-74 and Asn-95. A glycan (N-linked (GlcNAc...) asparagine) is linked at Asn-329. Residues 388 to 449 (AKDGEGQKNQ…ETDEPDKEKC (62 aa)) are disordered. Composition is skewed to basic and acidic residues over residues 414–423 (TNKEACEKEN) and 435–449 (KGKD…KEKC). The GPI-anchor amidated asparagine moiety is linked to residue Asn-451. Positions 452–474 (GSFLTSKQFAFSVVSAAFMALLF) are cleaved as a propeptide — removed in mature form.

The protein localises to the cell membrane. In terms of biological role, VSG forms a coat on the surface of the parasite. The trypanosome evades the immune response of the host by expressing a series of antigenically distinct VSGs from an estimated 1000 VSG genes. The protein is Variant surface glycoprotein MITAT 1.5 of Trypanosoma brucei brucei.